The primary structure comprises 280 residues: Phosphonates import ATP-binding protein PhnC (280 aa).

An ABC transporter domain is found at 4–239 (ITVTNLHKSY…VIDDIYGNIQ (236 aa)). An ATP-binding site is contributed by 36–43 (GESGAGKS). Residues 246-280 (GDDANADVAPTTSSDGGTDAAGGPDQQPASDPHLS) are disordered.

Belongs to the ABC transporter superfamily. Phosphonates importer (TC 3.A.1.9.1) family. As to quaternary structure, the complex is composed of two ATP-binding proteins (PhnC), two transmembrane proteins (PhnE) and a solute-binding protein (PhnD).

It localises to the cell membrane. It carries out the reaction phosphonate(out) + ATP + H2O = phosphonate(in) + ADP + phosphate + H(+). Functionally, part of the ABC transporter complex PhnCDE involved in phosphonates import. Responsible for energy coupling to the transport system. This is Phosphonates import ATP-binding protein PhnC from Halobacterium salinarum (strain ATCC 700922 / JCM 11081 / NRC-1) (Halobacterium halobium).